We begin with the raw amino-acid sequence, 433 residues long: MSDLTDIQEEITRHEQQLVVARQKLKDAERAVEVYPDDVIKNTLQARQQTVSALEDKLADYKRRMADAVSRKKMDTKPTDPTGIEPDDHLKERSSLRYGNVLDVNAIDIEEPSGQTADWYTIGVYVIGFTIPIILKALYMLSTRGRQTVKENKGTRIRFKDDTSFEDINGIRRPKHLYVSMPTAQSTMKAEELTPGRFRTIVCGLFPTQIQVRNIMSPVMGVIGFSFFVKDWPEKIREFMEKECPFIKPEVKPGTPAQEVEFLKRNRVYFMTRQDVLDKNHVADIDKLIDYAASGDPTSPDDIKSPNAPWVFACAPDRSPPTCIYVAGMAELGAFFSILQDMRNTIMASKTVGTAEEKLKRKSSFYQSYLRRTQSMGIQLDQRIILLYMLEWGKEMVDHFHLGDDMDPELRGLAQSLIDQKVKEISNQEPLKI.

The segment at 1–50 is rdRP binding; that stretch reads MSDLTDIQEEITRHEQQLVVARQKLKDAERAVEVYPDDVIKNTLQARQQT. Homomultimerization regions lie at residues 1–79 and 100–125; these read MSDL…TKPT and NVLD…IGVY. Residues 1 to 100 form a chaperone activity region; sequence MSDLTDIQEE…KERSSLRYGN (100 aa). The segment at 1 to 175 is viral panhandle binding; the sequence is MSDLTDIQEE…EDINGIRRPK (175 aa). Residues 4–71 adopt a coiled-coil conformation; it reads LTDIQEEITR…KRRMADAVSR (68 aa). The segment covering 69–78 has biased composition (basic and acidic residues); it reads VSRKKMDTKP. Positions 69-89 are disordered; that stretch reads VSRKKMDTKPTDPTGIEPDDH. Residues 80-248 form an interaction with glycoprotein N region; that stretch reads DPTGIEPDDH…FMEKECPFIK (169 aa). An interaction with host RPS19 region spans residues 150-175; sequence KENKGTRIRFKDDTSFEDINGIRRPK. The interval 175 to 217 is viral RNA-binding; sequence KHLYVSMPTAQSTMKAEELTPGRFRTIVCGLFPTQIQVRNIMS. The short motif at 178-181 is the YxxL element; that stretch reads YVSM. The interaction with host UBE2I/UBC9 stretch occupies residues 188–191; the sequence is MKAE. Residues 377 to 425 are homomultimerization; that stretch reads GIQLDQRIILLYMLEWGKEMVDHFHLGDDMDPELRGLAQSLIDQKVKEI. The interval 377–433 is interaction with host DAXX; that stretch reads GIQLDQRIILLYMLEWGKEMVDHFHLGDDMDPELRGLAQSLIDQKVKEISNQEPLKI.

The protein belongs to the hantavirus nucleocapsid protein family. As to quaternary structure, homotrimer. Homomultimer. Homomultimerizes and binds to viral genomic RNA to form the nucleocapsid. Interacts with host MAP1LC3B; this interaction participates to the protection of Gn from virus-triggered autophagy. Interacts with host SNAP29; this interaction participates to the protection of glycoprotein N from virus-triggered autophagy. Interacts (via N-terminus) with host RPS19; this interaction probably mediates the loading of the 40S ribosomal subunit on viral capped mRNA during N-mediated translation initiation. Interacts with the viral RdRp. Interacts with host SUMO1 (via N-terminus). Interacts with host DAXX. Interacts with the viral glycoprotein N (via C-terminus). Interacts with the viral glycoprotein C (via C-terminus).

Its subcellular location is the virion. The protein resides in the host cytoplasm. The protein localises to the host perinuclear region. It is found in the host Golgi apparatus. It localises to the host cis-Golgi network. Functionally, encapsidates the genome protecting it from nucleases. The encapsidated genomic RNA is termed the nucleocapsid (NC) and serves as template for transcription and replication. The nucleocapsid has a left-handed helical structure. As a trimer, specifically binds and acts as a chaperone to unwind the panhandle structure formed by the viral RNA (vRNA) termini. Involved in the transcription and replication initiation of vRNA by mediating primer annealing. Plays a role in cap snatching by sequestering capped RNAs in P bodies for use by the viral RdRp during transcription initiation. Substitutes for the cellular cap-binding complex (eIF4F) to preferentially facilitate the translation of capped mRNAs. Initiates the translation by specifically binding to the cap and 40S ribosomal subunit. Prevents the viral glycoprotein N (Gn) from autophagy-dependent breakdown maybe by blocking autophagosome formation. Inhibits host EIF2AK2/PKR dimerization to prevent PKR-induced translational shutdown in cells and thus the activation of the antiviral state. Also displays sequence-unspecific DNA endonuclease activity. The sequence is that of Nucleoprotein (N) from Homo sapiens (Human).